We begin with the raw amino-acid sequence, 391 residues long: Transaldolase (391 aa).

The active-site Schiff-base intermediate with substrate is the Lys-134. 2 EF-hand domains span residues Thr-329 to Leu-364 and Asp-365 to Leu-387. Residues Asp-342, Asp-344, Asp-346, Glu-353, Asp-365, Asn-367, Asp-369, Lys-371, and Asp-376 each contribute to the Ca(2+) site.

It belongs to the transaldolase family. Type 1 subfamily.

The protein localises to the cytoplasm. It carries out the reaction D-sedoheptulose 7-phosphate + D-glyceraldehyde 3-phosphate = D-erythrose 4-phosphate + beta-D-fructose 6-phosphate. It participates in carbohydrate degradation; pentose phosphate pathway; D-glyceraldehyde 3-phosphate and beta-D-fructose 6-phosphate from D-ribose 5-phosphate and D-xylulose 5-phosphate (non-oxidative stage): step 2/3. Transaldolase is important for the balance of metabolites in the pentose-phosphate pathway. This is Transaldolase from Thermosynechococcus vestitus (strain NIES-2133 / IAM M-273 / BP-1).